Consider the following 313-residue polypeptide: tRNA dimethylallyltransferase (313 aa).

An ATP-binding site is contributed by 17–24; that stretch reads GPTASGKT. Position 19 to 24 (19 to 24) interacts with substrate; the sequence is TASGKT. 3 interaction with substrate tRNA regions span residues 42–45, 166–170, and 247–252; these read DSAL, QRLSR, and RCVGYR.

It belongs to the IPP transferase family. Monomer. Mg(2+) serves as cofactor.

It carries out the reaction adenosine(37) in tRNA + dimethylallyl diphosphate = N(6)-dimethylallyladenosine(37) in tRNA + diphosphate. Functionally, catalyzes the transfer of a dimethylallyl group onto the adenine at position 37 in tRNAs that read codons beginning with uridine, leading to the formation of N6-(dimethylallyl)adenosine (i(6)A). The protein is tRNA dimethylallyltransferase of Pectobacterium atrosepticum (strain SCRI 1043 / ATCC BAA-672) (Erwinia carotovora subsp. atroseptica).